A 906-amino-acid chain; its full sequence is Protein translocase subunit SecA (906 aa).

ATP is bound by residues Gln89, 107–111, and Asp502; that span reads GEGKT. Zn(2+) is bound by residues Cys890, Cys892, Cys901, and His902.

The protein belongs to the SecA family. Monomer and homodimer. Part of the essential Sec protein translocation apparatus which comprises SecA, SecYEG and auxiliary proteins SecDF-YajC and YidC. The cofactor is Zn(2+).

The protein resides in the cell inner membrane. Its subcellular location is the cytoplasm. The catalysed reaction is ATP + H2O + cellular proteinSide 1 = ADP + phosphate + cellular proteinSide 2.. Part of the Sec protein translocase complex. Interacts with the SecYEG preprotein conducting channel. Has a central role in coupling the hydrolysis of ATP to the transfer of proteins into and across the cell membrane, serving both as a receptor for the preprotein-SecB complex and as an ATP-driven molecular motor driving the stepwise translocation of polypeptide chains across the membrane. This is Protein translocase subunit SecA from Bartonella quintana (strain Toulouse) (Rochalimaea quintana).